A 134-amino-acid chain; its full sequence is Putative esterase PA0474 (134 aa).

The protein belongs to the thioesterase PaaI family.

The protein is Putative esterase PA0474 of Pseudomonas aeruginosa (strain ATCC 15692 / DSM 22644 / CIP 104116 / JCM 14847 / LMG 12228 / 1C / PRS 101 / PAO1).